Reading from the N-terminus, the 393-residue chain is NAD(P)H-quinone oxidoreductase subunit H, chloroplastic (393 aa).

This sequence belongs to the complex I 49 kDa subunit family. In terms of assembly, NDH is composed of at least 16 different subunits, 5 of which are encoded in the nucleus.

Its subcellular location is the plastid. It is found in the chloroplast thylakoid membrane. The enzyme catalyses a plastoquinone + NADH + (n+1) H(+)(in) = a plastoquinol + NAD(+) + n H(+)(out). It carries out the reaction a plastoquinone + NADPH + (n+1) H(+)(in) = a plastoquinol + NADP(+) + n H(+)(out). In terms of biological role, NDH shuttles electrons from NAD(P)H:plastoquinone, via FMN and iron-sulfur (Fe-S) centers, to quinones in the photosynthetic chain and possibly in a chloroplast respiratory chain. The immediate electron acceptor for the enzyme in this species is believed to be plastoquinone. Couples the redox reaction to proton translocation, and thus conserves the redox energy in a proton gradient. The sequence is that of NAD(P)H-quinone oxidoreductase subunit H, chloroplastic from Ranunculus macranthus (Large buttercup).